The chain runs to 249 residues: Homeobox protein TGIF2LX (249 aa).

Disordered stretches follow at residues Met-1–Pro-65 and Asp-126–Lys-199. The segment covering Ala-9–Pro-27 has biased composition (basic and acidic residues). The segment covering Ala-28–Asp-46 has biased composition (polar residues). Positions Glu-55–Asp-118 form a DNA-binding region, homeobox; TALE-type. Residues Asp-159–Gly-172 show a composition bias toward polar residues.

Belongs to the TALE/TGIF homeobox family.

Its subcellular location is the nucleus. Functionally, may have a transcription role in testis. This chain is Homeobox protein TGIF2LX (TGIF2LX), found in Macaca mulatta (Rhesus macaque).